Consider the following 315-residue polypeptide: Porphobilinogen deaminase (315 aa).

Cys-238 carries the post-translational modification S-(dipyrrolylmethanemethyl)cysteine.

It belongs to the HMBS family. In terms of assembly, monomer. Dipyrromethane serves as cofactor.

It catalyses the reaction 4 porphobilinogen + H2O = hydroxymethylbilane + 4 NH4(+). It participates in porphyrin-containing compound metabolism; protoporphyrin-IX biosynthesis; coproporphyrinogen-III from 5-aminolevulinate: step 2/4. Tetrapolymerization of the monopyrrole PBG into the hydroxymethylbilane pre-uroporphyrinogen in several discrete steps. This is Porphobilinogen deaminase from Albidiferax ferrireducens (strain ATCC BAA-621 / DSM 15236 / T118) (Rhodoferax ferrireducens).